The sequence spans 3726 residues: Zinc finger homeobox protein 3 (3726 aa).

2 disordered regions span residues 1-79 (MEGC…SKEV) and 95-129 (MEHH…VENL). The segment at 79-103 (VSCNECSASFSSLQTYMEHHCPGTH) adopts a C2H2-type 1 zinc-finger fold. A compositionally biased stretch (acidic residues) spans 116 to 126 (TSEEGEEESDV). The C2H2-type 2 zinc-finger motif lies at 282–305 (LMCFLCKLSFGYVRSFVTHAVHDH). The segment at 417 to 557 (SVPLGPLASS…GPASTTSNSA (141 aa)) is disordered. Residue serine 426 is modified to Phosphoserine. Threonine 428 is modified (phosphothreonine). The segment covering 431 to 459 (SEGKDSGAAEGDKQESGGHQDCFSEKVEP) has biased composition (basic and acidic residues). Acidic residues-rich tracts occupy residues 460–491 (AEEE…EEEE) and 500–510 (DLEEELEDSPS). A compositionally biased stretch (polar residues) spans 528–557 (SNPSISNSPLMPNVLQTLSRGPASTTSNSA). Residues serine 535 and serine 573 each carry the phosphoserine modification. The interval 590 to 621 (DFADESANKDSATAPEPNESTEGDDGGFVPHH) is disordered. C2H2-type zinc fingers lie at residues 641-664 (VECP…TMMH), 672-695 (LKCP…KEKH), and 727-751 (FRCE…SDKH). Residues 805 to 829 (WRCEVCDYETNVARNLRIHMTSEKH) form a C2H2-type 6; atypical zinc finger. The C2H2-type 7; degenerate zinc-finger motif lies at 946-969 (FQCAVCNKFTTDNLDMLGLHMNVE). A C2H2-type 8; atypical zinc finger spans residues 985 to 1009 (YQCKLCRYNTQLKANFQLHCKTDKH). The segment at 1041–1065 (LKCNACDYYTNSLEKLRLHTVNSRH) adopts a C2H2-type 9; atypical zinc-finger fold. A C2H2-type 10; atypical zinc finger spans residues 1089-1113 (YHCVLCNYSTKAKLNLIQHVRSMKH). Residues 1125 to 1228 (LQKGLPEEDE…KRPKASEEIK (104 aa)) form a disordered region. The span at 1149–1159 (DPEEPVEDAEG) shows a compositional bias: acidic residues. 2 stretches are compositionally biased toward polar residues: residues 1175–1191 (GSGS…SSSQ) and 1199–1217 (SPAT…TPLS). The residue at position 1207 (serine 1207) is a Phosphoserine. The C2H2-type 11; atypical zinc-finger motif lies at 1233-1256 (YQCPYCKYSNADVNRLRVHAMTQH). The C2H2-type 12 zinc finger occupies 1262–1285 (LRCPLCQDMLNNKIHLQLHLTHLH). Positions 1320–1361 (DGNSTLEEVGKQPEASEDPGKNILPPASMEHGGDLKPTSADP) are disordered. 3 consecutive C2H2-type zinc fingers follow at residues 1370–1395 (FLCW…NEVH), 1411–1433 (YRCN…SQYH), and 1439–1462 (TMCC…ETSH). The tract at residues 1500 to 1539 (EEDKEEESDLEDKQSPTGSDSGSVQEDSGSEPKRALPFRK) is disordered. The segment covering 1514–1526 (SPTGSDSGSVQED) has biased composition (polar residues). A C2H2-type 16 zinc finger spans residues 1555–1579 (YKCTVCKESFTQKNILLVHYNSVSH). Residue serine 1600 is modified to Phosphoserine. The C2H2-type 17 zinc finger occupies 1606-1630 (FKCNTCNVAYSQSSTLEIHMRSVLH). Disordered regions lie at residues 1639 to 1678 (LEAA…TATN), 1706 to 1738 (NPIS…QQQQ), and 1866 to 1943 (LSQS…PRIA). Positions 1643–1669 (SGNSNGTGNSGGVSLSSSTPSPVGSSG) are enriched in low complexity. The segment covering 1717-1727 (EPKEANRKKLA) has biased composition (basic and acidic residues). A compositionally biased stretch (low complexity) spans 1866–1878 (LSQSHSALLQPSQ). Residues 1879 to 1902 (HPEKKNKVVIKEKDKESQREREGP) show a composition bias toward basic and acidic residues. A C2H2-type 18 zinc finger spans residues 1990–2013 (LECDSCGKLFSNILILKSHQEHVH). Disordered regions lie at residues 2037–2089 (YPLR…AQPS) and 2211–2249 (NKDS…WGSK). Residues 2041–2066 (PQTPEPPPPPPPPPPPPLPTAPPQPA) show a composition bias toward pro residues. The homeobox 1 DNA-binding region spans 2152-2211 (NKRPRTRITDDQLRVLRQYFDINNSPSEEQIKEMADKSGLPQKVIKHWFRNTLFKERQRN). A compositionally biased stretch (polar residues) spans 2214–2223 (SPYNFSNPPI). The segment at residues 2249 to 2308 (KRSSRTRFTDYQLRVLQDFFDANAYPKDDEFEQLSNLLNLPTRVIVVWFQNARQKARKNY) is a DNA-binding region (homeobox 2). The C2H2-type 19; atypical zinc finger occupies 2335 to 2358 (YQCKKCSLVFQRIFDLIKHQKKLC). Lysine 2356 is covalently cross-linked (Glycyl lysine isopeptide (Lys-Gly) (interchain with G-Cter in SUMO1)). Disordered stretches follow at residues 2383-2405 (TPTS…APSA) and 2429-2529 (NSKA…PQQL). Residues 2458 to 2478 (QPKPEMQQQLEQLEQKTNAPQ) show a composition bias toward low complexity. The span at 2479–2507 (PKLPQPAAPSLPQPPPQAPPPQCPLPQSS) shows a compositional bias: pro residues. The span at 2508 to 2521 (PSPSQLSHLPLKPL) shows a compositional bias: low complexity. A C2H2-type 20 zinc finger spans residues 2539–2561 (YQCDQCKLAFPSFEHWQEHQQLH). The Nuclear localization signal signature appears at 2624–2626 (KRK). Residues 2628–2656 (EEKASASPGENDSGTGGEEPQRDKRLRTT) form a disordered region. Serine 2634 is modified (phosphoserine). Positions 2650–2709 (DKRLRTTITPEQLEILYQKYLLDSNPTRKMLDHIAHEVGLKKRVVQVWFQNTRARERKGQ) form a DNA-binding region, homeobox 3. The C2H2-type 21 zinc finger occupies 2720–2743 (RRCPFCRALFKAKTALEAHIRSRH). Over residues 2780-2789 (SHLPPSSSDG) the composition is skewed to polar residues. A disordered region spans residues 2780 to 2805 (SHLPPSSSDGQGVPLSPVSKTMELSP). 2 positions are modified to phosphoserine: serine 2795 and serine 2804. Residue lysine 2815 forms a Glycyl lysine isopeptide (Lys-Gly) (interchain with G-Cter in SUMO1); alternate linkage. Residue lysine 2815 forms a Glycyl lysine isopeptide (Lys-Gly) (interchain with G-Cter in SUMO2); alternate linkage. The segment at 2850–2877 (AITDTTTGDEGNADNDSATGIATETKSS) is disordered. Phosphoserine occurs at positions 2900 and 2904. The tract at residues 2920–2955 (VDYSETSSLADPCSPSPGASGSAGKSGDGGDRPGQK) is disordered. The span at 2929–2944 (ADPCSPSPGASGSAGK) shows a compositional bias: low complexity. Residues 2952 to 3011 (PGQKRFRTQMTNLQLKVLKSCFNDYRTPTMLECEVLGNDIGLPKRVVQVWFQNARAKEKK) constitute a DNA-binding region (homeobox 4). A C2H2-type 22 zinc finger spans residues 3032–3056 (TECTLCGIKYSARLSVRDHIFSQQH). Disordered regions lie at residues 3145 to 3274 (FTPA…AGTG) and 3415 to 3476 (QQQQ…SASA). Residues 3147 to 3156 (PANTALTSPK) show a composition bias toward polar residues. The span at 3181-3199 (PSSASLSSPTPAQATMAMA) shows a compositional bias: low complexity. The span at 3200-3221 (PQPPPQPQQPQPPVQQPPPPPA) shows a compositional bias: pro residues. Over residues 3222 to 3234 (AQQIPAPQLTPQQ) the composition is skewed to low complexity. The segment covering 3235–3267 (QRKDKDGEKGKEKEKAHKGKGEPLPVPKKEKGE) has biased composition (basic and acidic residues). Lysine 3262 participates in a covalent cross-link: Glycyl lysine isopeptide (Lys-Gly) (interchain with G-Cter in SUMO1). A Phosphoserine modification is found at serine 3434. Basic and acidic residues predominate over residues 3435 to 3453 (PDKDPAKESPKPEEQKNVP). The residue at position 3457 (serine 3457) is a Phosphoserine. Residues 3552-3576 (YHCLACESALCGEEALSQHLESALH) form a C2H2-type 23 zinc finger. The disordered stretch occupies residues 3588–3726 (AKEHPSLLPH…TSVGTDTFRL (139 aa)). 2 stretches are compositionally biased toward low complexity: residues 3605-3618 (STAS…HSND) and 3645-3677 (SRAS…VQPS). Serine 3616 is modified (phosphoserine). Serine 3700 carries the phosphoserine modification. Over residues 3715-3726 (GLTSVGTDTFRL) the composition is skewed to polar residues.

Interacts with ALKBH4 and PIAS3. Interacts with FNBP3. Interacts with ESR1, RUNX3, TRIM25, SMAD2 and SMAD3. Post-translationally, phosphorylated at Ser-2634 in both embryonic and adult brain. Phosphorylation at Ser-1600, Ser-2795, Ser-2804, Ser-2900, Ser-3434, Ser-3616 and Ser-3700 is restricted to the embryonic brain. Hyperphosphorylation in embryonic brain protects ZFHX3 from calpain/CAPN1-mediated degradation. In terms of processing, ubiquitinated, leading to its proteasomal degradation. Nuclear localization is essential for its sumoylation. As to expression, expressed in suprachiasmatic nucleus (SCN) of the brain (at protein level). Expressed in skeletal muscle. Levels of expression are high in myoblasts but low in differentiated muscle. Expressed in the heart, primarily in the atria.

It localises to the nucleus. The protein localises to the cytoplasm. In terms of biological role, transcriptional regulator which can act as an activator or a repressor. Inhibits the enhancer element of the AFP gene by binding to its AT-rich core sequence. In concert with SMAD-dependent TGF-beta signaling can repress the transcription of AFP via its interaction with SMAD2/3. Regulates the circadian locomotor rhythms via transcriptional activation of neuropeptidergic genes which are essential for intercellular synchrony and rhythm amplitude in the suprachiasmatic nucleus (SCN) of the brain. Regulator of myoblasts differentiation through the binding to the AT-rich sequence of MYF6 promoter and promoter repression. Down-regulates the MUC5AC promoter in gastric cancer. In association with RUNX3, up-regulates CDKN1A promoter activity following TGF-beta stimulation. This chain is Zinc finger homeobox protein 3 (Zfhx3), found in Mus musculus (Mouse).